Here is a 635-residue protein sequence, read N- to C-terminus: Threonine--tRNA ligase (635 aa).

The TGS domain occupies 1–61 (MVSIRLPDGS…DRDASLAIVT (61 aa)). Residues 242–533 (DHRKLGKQLD…LIEHHAGAMP (292 aa)) are catalytic. The Zn(2+) site is built by cysteine 333, histidine 384, and histidine 510.

Belongs to the class-II aminoacyl-tRNA synthetase family. In terms of assembly, homodimer. Zn(2+) serves as cofactor.

The protein resides in the cytoplasm. It catalyses the reaction tRNA(Thr) + L-threonine + ATP = L-threonyl-tRNA(Thr) + AMP + diphosphate + H(+). In terms of biological role, catalyzes the attachment of threonine to tRNA(Thr) in a two-step reaction: L-threonine is first activated by ATP to form Thr-AMP and then transferred to the acceptor end of tRNA(Thr). Also edits incorrectly charged L-seryl-tRNA(Thr). The protein is Threonine--tRNA ligase of Burkholderia lata (strain ATCC 17760 / DSM 23089 / LMG 22485 / NCIMB 9086 / R18194 / 383).